Here is a 325-residue protein sequence, read N- to C-terminus: Acetyl-coenzyme A carboxylase carboxyl transferase subunit alpha (325 aa).

The region spanning 35–292 is the CoA carboxyltransferase C-terminal domain; that stretch reads EIEKLEARLT…DRVLRASLKQ (258 aa).

Belongs to the AccA family. As to quaternary structure, acetyl-CoA carboxylase is a heterohexamer composed of biotin carboxyl carrier protein (AccB), biotin carboxylase (AccC) and two subunits each of ACCase subunit alpha (AccA) and ACCase subunit beta (AccD).

The protein localises to the cytoplasm. It carries out the reaction N(6)-carboxybiotinyl-L-lysyl-[protein] + acetyl-CoA = N(6)-biotinyl-L-lysyl-[protein] + malonyl-CoA. Its pathway is lipid metabolism; malonyl-CoA biosynthesis; malonyl-CoA from acetyl-CoA: step 1/1. Its function is as follows. Component of the acetyl coenzyme A carboxylase (ACC) complex. First, biotin carboxylase catalyzes the carboxylation of biotin on its carrier protein (BCCP) and then the CO(2) group is transferred by the carboxyltransferase to acetyl-CoA to form malonyl-CoA. The protein is Acetyl-coenzyme A carboxylase carboxyl transferase subunit alpha of Geobacillus thermodenitrificans (strain NG80-2).